Reading from the N-terminus, the 72-residue chain is Translation initiation factor IF-1 (72 aa).

The S1-like domain maps to 1-72 (MTKEDNIEMQ…TKGRIIFRSR (72 aa)).

The protein belongs to the IF-1 family. As to quaternary structure, component of the 30S ribosomal translation pre-initiation complex which assembles on the 30S ribosome in the order IF-2 and IF-3, IF-1 and N-formylmethionyl-tRNA(fMet); mRNA recruitment can occur at any time during PIC assembly.

Its subcellular location is the cytoplasm. In terms of biological role, one of the essential components for the initiation of protein synthesis. Stabilizes the binding of IF-2 and IF-3 on the 30S subunit to which N-formylmethionyl-tRNA(fMet) subsequently binds. Helps modulate mRNA selection, yielding the 30S pre-initiation complex (PIC). Upon addition of the 50S ribosomal subunit IF-1, IF-2 and IF-3 are released leaving the mature 70S translation initiation complex. The chain is Translation initiation factor IF-1 from Buchnera aphidicola subsp. Schizaphis graminum (strain Sg).